The primary structure comprises 132 residues: MSTKFVEVGELKEGSYVVIDGEPCRVVEIEKSKTGKHGSAKARIVAVGMFDGGKRTLSLPVDAQIEVPIIEKFTAQILSISGDIIQLMDMRDYKTIEVPMKYVEDEAKGRLAPGSEVEVWQILDRYKIVRVK.

Lysine 36 is modified (hypusine).

The protein belongs to the eIF-5A family.

The protein resides in the cytoplasm. Its function is as follows. Functions by promoting the formation of the first peptide bond. This chain is Translation initiation factor 5A (eIF5A), found in Pyrobaculum arsenaticum (strain DSM 13514 / JCM 11321 / PZ6).